A 32-amino-acid polypeptide reads, in one-letter code: Cruzioseptin-9 (32 aa).

The residue at position 29 (Gln-29) is a Glutamine amide. The propeptide occupies 31-32 (EQ).

As to expression, expressed by the skin glands.

Its subcellular location is the secreted. Has antimicrobial activity. This chain is Cruzioseptin-9, found in Cruziohyla calcarifer (Splendid leaf frog).